The chain runs to 228 residues: 2,3-bisphosphoglycerate-dependent phosphoglycerate mutase (228 aa).

Substrate contacts are provided by residues 8–15 (RHGQSQWN), 21–22 (TG), Arg-60, 87–90 (ERHY), Lys-98, 114–115 (RR), and 180–181 (GN). His-9 serves as the catalytic Tele-phosphohistidine intermediate. Glu-87 acts as the Proton donor/acceptor in catalysis.

The protein belongs to the phosphoglycerate mutase family. BPG-dependent PGAM subfamily. As to quaternary structure, homodimer.

The catalysed reaction is (2R)-2-phosphoglycerate = (2R)-3-phosphoglycerate. The protein operates within carbohydrate degradation; glycolysis; pyruvate from D-glyceraldehyde 3-phosphate: step 3/5. In terms of biological role, catalyzes the interconversion of 2-phosphoglycerate and 3-phosphoglycerate. The polypeptide is 2,3-bisphosphoglycerate-dependent phosphoglycerate mutase (Erythrobacter litoralis (strain HTCC2594)).